The primary structure comprises 226 residues: Phosphoenolpyruvate guanylyltransferase (226 aa).

Phosphoenolpyruvate is bound by residues Thr-145, Gly-161, and Ser-164.

It belongs to the CofC family.

The enzyme catalyses phosphoenolpyruvate + GTP + H(+) = enolpyruvoyl-2-diphospho-5'-guanosine + diphosphate. Its pathway is cofactor biosynthesis; coenzyme F420 biosynthesis. Its function is as follows. Guanylyltransferase that catalyzes the activation of phosphoenolpyruvate (PEP) as enolpyruvoyl-2-diphospho-5'-guanosine, via the condensation of PEP with GTP. It is involved in the biosynthesis of coenzyme F420, a hydride carrier cofactor. The polypeptide is Phosphoenolpyruvate guanylyltransferase (Nocardia farcinica (strain IFM 10152)).